Consider the following 559-residue polypeptide: D-2-hydroxyglutarate dehydrogenase, mitochondrial (559 aa).

The N-terminal 78 residues, 1 to 78 (MMMQKLRRSG…GMLLQQYKCF (78 aa)), are a transit peptide targeting the mitochondrion. Residues 130-309 (YKGSSKLMLL…TKVSILTQPK (180 aa)) form the FAD-binding PCMH-type domain.

This sequence belongs to the FAD-binding oxidoreductase/transferase type 4 family. In terms of assembly, homodimer. It depends on FAD as a cofactor.

The protein localises to the mitochondrion. It catalyses the reaction (R)-2-hydroxyglutarate + A = 2-oxoglutarate + AH2. Its function is as follows. Catalyzes the oxidation of (R)-2-hydroxyglutarate to 2-oxoglutarate. May be involved in the catabolism of propionyl-CoA derived from beta-oxidation. Involved in degradation of lysine for the supply of carbon and electrons to the ETF/ETFQO complex during dark-induced sugar starvation. The sequence is that of D-2-hydroxyglutarate dehydrogenase, mitochondrial (D2HGDH) from Arabidopsis thaliana (Mouse-ear cress).